The sequence spans 215 residues: Large ribosomal subunit protein uL3 (215 aa).

Over residues 131–144 (SSSRASHGNSRSHN) the composition is skewed to low complexity. Positions 131–150 (SSSRASHGNSRSHNVPGSIG) are disordered. N5-methylglutamine is present on Gln-153.

The protein belongs to the universal ribosomal protein uL3 family. Part of the 50S ribosomal subunit. Forms a cluster with proteins L14 and L19. Methylated by PrmB.

Its function is as follows. One of the primary rRNA binding proteins, it binds directly near the 3'-end of the 23S rRNA, where it nucleates assembly of the 50S subunit. The protein is Large ribosomal subunit protein uL3 of Nitrosomonas europaea (strain ATCC 19718 / CIP 103999 / KCTC 2705 / NBRC 14298).